Consider the following 420-residue polypeptide: Serine hydroxymethyltransferase (420 aa).

Residues L121 and G125–L127 each bind (6S)-5,6,7,8-tetrahydrofolate. K229 bears the N6-(pyridoxal phosphate)lysine mark. S355–F357 is a binding site for (6S)-5,6,7,8-tetrahydrofolate.

It belongs to the SHMT family. Homodimer. Pyridoxal 5'-phosphate is required as a cofactor.

It localises to the cytoplasm. It carries out the reaction (6R)-5,10-methylene-5,6,7,8-tetrahydrofolate + glycine + H2O = (6S)-5,6,7,8-tetrahydrofolate + L-serine. The protein operates within one-carbon metabolism; tetrahydrofolate interconversion. Its pathway is amino-acid biosynthesis; glycine biosynthesis; glycine from L-serine: step 1/1. Functionally, catalyzes the reversible interconversion of serine and glycine with tetrahydrofolate (THF) serving as the one-carbon carrier. This reaction serves as the major source of one-carbon groups required for the biosynthesis of purines, thymidylate, methionine, and other important biomolecules. Also exhibits THF-independent aldolase activity toward beta-hydroxyamino acids, producing glycine and aldehydes, via a retro-aldol mechanism. This is Serine hydroxymethyltransferase from Chromohalobacter salexigens (strain ATCC BAA-138 / DSM 3043 / CIP 106854 / NCIMB 13768 / 1H11).